A 353-amino-acid chain; its full sequence is Neutral protease 2 homolog AO090001000135 (353 aa).

Residues 1-19 (MRFISVSSLLLALAPALNA) form the signal peptide. Positions 20-176 (VPVEVAGSAQ…TQAVKILERR (157 aa)) are excised as a propeptide. 2 disulfides stabilise this stretch: cysteine 182-cysteine 254 and cysteine 261-cysteine 279. A Zn(2+)-binding site is contributed by histidine 304. Glutamate 305 is a catalytic residue. Zn(2+) contacts are provided by histidine 308 and aspartate 319.

The protein belongs to the peptidase M35 family. Requires Zn(2+) as cofactor.

The protein resides in the secreted. The catalysed reaction is Preferential cleavage of bonds with hydrophobic residues in P1'. Also 3-Asn-|-Gln-4 and 8-Gly-|-Ser-9 bonds in insulin B chain.. In terms of biological role, secreted metalloproteinase that allows assimilation of proteinaceous substrates. Shows high activities on basic nuclear substrates such as histone and protamine. In Aspergillus oryzae (strain ATCC 42149 / RIB 40) (Yellow koji mold), this protein is Neutral protease 2 homolog AO090001000135.